Consider the following 454-residue polypeptide: MAAEGKAIAKVNDLVIFVPYVVPGDVVDLQIKRKKNKYAEAEAVKFHELSPVRAVPFCQHYGVCGGCKWQVLPYSEQIRYKQKQVEDNLRRIGKIELPEISPILGSAKTEFYRNKLEFTFSNKRWLTNDEVRQDVKYDQMNAVGFHIPGAFDKVLAIEKCWLQDDISNRIRNAVRDYAYEHDYSFINLRTQEGMLRNLIIRTSSTGELMVIVICKITEDHEMELFKQLLQFIADSFPEITSLLYIINNKCNDTINDLDVHVFKGKDHMFEEMEGLRFKVGPKSFYQTNSEQAYNLYKIAREFAGLTGKELVYDLYTGTGTIANFVSRQARQVIGIEYVPEAIEDAKVNAEINEIKNALFYAGDMKDMLTQEFINQHGRPDVIITDPPRAGMHQDVVDVILFAEPKRIVYVSCNPATQARDLQLLDGKYKVKAVQPVDMFPHTHHVENVVLLELR.

The 45-residue stretch at 1 to 45 (MAAEGKAIAKVNDLVIFVPYVVPGDVVDLQIKRKKNKYAEAEAVK) folds into the TRAM domain. [4Fe-4S] cluster is bound by residues Cys58, Cys64, Cys67, and Cys160. S-adenosyl-L-methionine contacts are provided by Gln286, Tyr315, Glu336, and Asp385. The Nucleophile role is filled by Cys412.

It belongs to the class I-like SAM-binding methyltransferase superfamily. RNA M5U methyltransferase family.

This is an uncharacterized protein from Bacteroides thetaiotaomicron (strain ATCC 29148 / DSM 2079 / JCM 5827 / CCUG 10774 / NCTC 10582 / VPI-5482 / E50).